A 213-amino-acid chain; its full sequence is Probable transaldolase (213 aa).

Lys-83 serves as the catalytic Schiff-base intermediate with substrate.

This sequence belongs to the transaldolase family. Type 3B subfamily.

The protein resides in the cytoplasm. The catalysed reaction is D-sedoheptulose 7-phosphate + D-glyceraldehyde 3-phosphate = D-erythrose 4-phosphate + beta-D-fructose 6-phosphate. It functions in the pathway carbohydrate degradation; pentose phosphate pathway; D-glyceraldehyde 3-phosphate and beta-D-fructose 6-phosphate from D-ribose 5-phosphate and D-xylulose 5-phosphate (non-oxidative stage): step 2/3. Its function is as follows. Transaldolase is important for the balance of metabolites in the pentose-phosphate pathway. This is Probable transaldolase from Geobacillus sp. (strain WCH70).